A 291-amino-acid polypeptide reads, in one-letter code: Protease HtpX homolog (291 aa).

The next 2 membrane-spanning stretches (helical) occupy residues 4–24 (VILFLLTNFAVMLVLSVTARI) and 38–58 (MGMLLVFAALIGFGGSFISLL). Histidine 144 lines the Zn(2+) pocket. The active site involves glutamate 145. Histidine 148 contacts Zn(2+). The next 2 helical transmembrane spans lie at 159 to 179 (LIQGVLNTFVIFLSRIIAYAV) and 199 to 219 (ISSIACEILFGILASIVVMFF). Glutamate 224 provides a ligand contact to Zn(2+).

Belongs to the peptidase M48B family. The cofactor is Zn(2+).

The protein localises to the cell inner membrane. This Pelodictyon phaeoclathratiforme (strain DSM 5477 / BU-1) protein is Protease HtpX homolog.